Consider the following 198-residue polypeptide: Ribonuclease HII (198 aa).

Residues glutamine 10–serine 198 form the RNase H type-2 domain. Residues aspartate 16, glutamate 17, and aspartate 108 each contribute to the a divalent metal cation site.

The protein belongs to the RNase HII family. Mn(2+) serves as cofactor. Requires Mg(2+) as cofactor.

Its subcellular location is the cytoplasm. It carries out the reaction Endonucleolytic cleavage to 5'-phosphomonoester.. In terms of biological role, endonuclease that specifically degrades the RNA of RNA-DNA hybrids. This chain is Ribonuclease HII, found in Escherichia coli O6:H1 (strain CFT073 / ATCC 700928 / UPEC).